The following is a 76-amino-acid chain: Omega-scoloptoxin(13)-Ssm2b (76 aa).

Positions 1-22 (MAYIYALIFAIVVCMNTDVIQA) are cleaved as a signal peptide.

The protein belongs to the scoloptoxin-13 family. Post-translationally, contains 3 disulfide bonds. As to expression, expressed by the venom gland.

Its subcellular location is the secreted. Functionally, inhibits voltage-gated calcium channel (Cav) currents. This chain is Omega-scoloptoxin(13)-Ssm2b, found in Scolopendra mutilans (Chinese red-headed centipede).